A 94-amino-acid polypeptide reads, in one-letter code: Ribonuclease P protein component 1 (94 aa).

Belongs to the eukaryotic/archaeal RNase P protein component 1 family. In terms of assembly, consists of a catalytic RNA component and at least 4-5 protein subunits.

Its subcellular location is the cytoplasm. It carries out the reaction Endonucleolytic cleavage of RNA, removing 5'-extranucleotides from tRNA precursor.. Its function is as follows. Part of ribonuclease P, a protein complex that generates mature tRNA molecules by cleaving their 5'-ends. This is Ribonuclease P protein component 1 from Haloarcula marismortui (strain ATCC 43049 / DSM 3752 / JCM 8966 / VKM B-1809) (Halobacterium marismortui).